Consider the following 110-residue polypeptide: Senescence associated gene 20 (110 aa).

This is Senescence associated gene 20 from Arabidopsis thaliana (Mouse-ear cress).